The primary structure comprises 164 residues: MENYQGQHGYGADRVDVYGNPVGAGQYGGGATAPGGGHGAMGMGGHAGAGAGGQFQPAREDRKTGGILHRSGSSSSSSSSEDDGMGGRRKKGIKEKIKEKLPGGNKGNNQQQQQMMGNTGGAYGQQGHAGMTGAGTGVHGAEYGNAGEKKGFMDKIKEKLPGQH.

A disordered region spans residues 1 to 164; the sequence is MENYQGQHGY…KIKEKLPGQH (164 aa). Positions 25–53 are enriched in gly residues; the sequence is GQYGGGATAPGGGHGAMGMGGHAGAGAGG. Residues 107 to 117 are compositionally biased toward low complexity; that stretch reads GNNQQQQQMMG. Residues 147-164 show a composition bias toward basic and acidic residues; the sequence is GEKKGFMDKIKEKLPGQH.

It belongs to the plant dehydrin family.

The chain is Dehydrin Rab16B (RAB16B) from Oryza sativa subsp. indica (Rice).